The following is a 585-amino-acid chain: Membrane protein insertase YidC (585 aa).

Helical transmembrane passes span 5–25 (SVTG…FMSP), 338–358 (FGWD…AFTW), 362–382 (FVSN…LVTY), 432–452 (LGGC…FYVF), 482–502 (IPMY…TVFL), and 518–538 (IMLY…PSGL).

The protein belongs to the OXA1/ALB3/YidC family. Type 1 subfamily. Interacts with the Sec translocase complex via SecD. Specifically interacts with transmembrane segments of nascent integral membrane proteins during membrane integration.

It localises to the cell inner membrane. Its function is as follows. Required for the insertion and/or proper folding and/or complex formation of integral membrane proteins into the membrane. Involved in integration of membrane proteins that insert both dependently and independently of the Sec translocase complex, as well as at least some lipoproteins. Aids folding of multispanning membrane proteins. This chain is Membrane protein insertase YidC, found in Chlorobium luteolum (strain DSM 273 / BCRC 81028 / 2530) (Pelodictyon luteolum).